We begin with the raw amino-acid sequence, 555 residues long: Pyrophosphate--fructose 6-phosphate 1-phosphotransferase (555 aa).

Residue G82 participates in diphosphate binding. R146 contacts substrate. D176 provides a ligand contact to Mg(2+). Substrate contacts are provided by residues 204–206, 243–244, 251–253, E312, and 428–431; these read TID, KY, MGR, and YEGR. D206 functions as the Proton acceptor in the catalytic mechanism.

This sequence belongs to the phosphofructokinase type A (PFKA) family. PPi-dependent PFK group II subfamily. Clade 'Long' sub-subfamily. As to quaternary structure, homodimer. The cofactor is Mg(2+).

The protein localises to the cytoplasm. The enzyme catalyses beta-D-fructose 6-phosphate + diphosphate = beta-D-fructose 1,6-bisphosphate + phosphate + H(+). It functions in the pathway carbohydrate degradation; glycolysis; D-glyceraldehyde 3-phosphate and glycerone phosphate from D-glucose: step 3/4. Its activity is regulated as follows. Non-allosteric. In terms of biological role, catalyzes the phosphorylation of D-fructose 6-phosphate, the first committing step of glycolysis. Uses inorganic phosphate (PPi) as phosphoryl donor instead of ATP like common ATP-dependent phosphofructokinases (ATP-PFKs), which renders the reaction reversible, and can thus function both in glycolysis and gluconeogenesis. Consistently, PPi-PFK can replace the enzymes of both the forward (ATP-PFK) and reverse (fructose-bisphosphatase (FBPase)) reactions. This Borreliella burgdorferi (strain ATCC 35210 / DSM 4680 / CIP 102532 / B31) (Borrelia burgdorferi) protein is Pyrophosphate--fructose 6-phosphate 1-phosphotransferase.